A 71-amino-acid polypeptide reads, in one-letter code: MAAKLKKGSLVRVIKEQFTNSLEAKASDSRLPAYFFGSQGEILDLDDEYAFVRFYTPTPSVWLRLDQLEAV.

The protein belongs to the complex I NdhO subunit family. In terms of assembly, NDH-1 can be composed of about 15 different subunits; different subcomplexes with different compositions have been identified which probably have different functions.

The protein localises to the cellular thylakoid membrane. It carries out the reaction a plastoquinone + NADH + (n+1) H(+)(in) = a plastoquinol + NAD(+) + n H(+)(out). The catalysed reaction is a plastoquinone + NADPH + (n+1) H(+)(in) = a plastoquinol + NADP(+) + n H(+)(out). Its function is as follows. NDH-1 shuttles electrons from an unknown electron donor, via FMN and iron-sulfur (Fe-S) centers, to quinones in the respiratory and/or the photosynthetic chain. The immediate electron acceptor for the enzyme in this species is believed to be plastoquinone. Couples the redox reaction to proton translocation, and thus conserves the redox energy in a proton gradient. Cyanobacterial NDH-1 also plays a role in inorganic carbon-concentration. The sequence is that of NAD(P)H-quinone oxidoreductase subunit O from Picosynechococcus sp. (strain ATCC 27264 / PCC 7002 / PR-6) (Agmenellum quadruplicatum).